Here is a 308-residue protein sequence, read N- to C-terminus: MSFKNRNVISMKDFSRKEINYILDTAEKLEPVARGKKRSRLLDGKIIALLFFEPSTRTRLSFESAAQRLGGQVLNLGSVEASSVMKGENLADTIRVISKYADLIVLRHPLDGSARMAAEFASVPIINGGDGSLHHPTQTFLDLYTIRRESHLEGLKIAMAGDLKYGRTVHSLCHALSLYGAEITLVSPPELRMPQEIIRDLQKNNIRIRETDALEEIIGDVEVLYMTRVQRERFPDPEEYEKVKNKLKVTGDLLKNADPSLKILHPLPRVNEISPEVDSTPYACYFEQAFYGVPTRMALLALATGVIE.

Residues Arg-57 and Thr-58 each coordinate carbamoyl phosphate. Lys-86 is an L-aspartate binding site. Carbamoyl phosphate contacts are provided by Arg-107, His-135, and Gln-138. 2 residues coordinate L-aspartate: Arg-167 and Arg-228. 2 residues coordinate carbamoyl phosphate: Leu-267 and Pro-268.

Belongs to the aspartate/ornithine carbamoyltransferase superfamily. ATCase family. In terms of assembly, heterooligomer of catalytic and regulatory chains.

The enzyme catalyses carbamoyl phosphate + L-aspartate = N-carbamoyl-L-aspartate + phosphate + H(+). The protein operates within pyrimidine metabolism; UMP biosynthesis via de novo pathway; (S)-dihydroorotate from bicarbonate: step 2/3. In terms of biological role, catalyzes the condensation of carbamoyl phosphate and aspartate to form carbamoyl aspartate and inorganic phosphate, the committed step in the de novo pyrimidine nucleotide biosynthesis pathway. The protein is Aspartate carbamoyltransferase catalytic subunit of Methanosarcina barkeri (strain Fusaro / DSM 804).